The chain runs to 115 residues: MSTSEILKHIYDINLSYLLLAQRLIHDDKASAMFRLGIDADMAETLVQLTLPQMVKLAETNQLVCQFRFEDHQTIQRLTQESRVDDLQQIHTGILLSSHLLQQLSADGNDSGKRG.

The protein belongs to the FlhD family. In terms of assembly, homodimer; disulfide-linked. Forms a heterohexamer composed of two FlhC and four FlhD subunits. Each FlhC binds a FlhD dimer, forming a heterotrimer, and a hexamer assembles by dimerization of two heterotrimers.

The protein localises to the cytoplasm. Its function is as follows. Functions in complex with FlhC as a master transcriptional regulator that regulates transcription of several flagellar and non-flagellar operons by binding to their promoter region. Activates expression of class 2 flagellar genes, including fliA, which is a flagellum-specific sigma factor that turns on the class 3 genes. Also regulates genes whose products function in a variety of physiological pathways. This chain is Flagellar transcriptional regulator FlhD, found in Edwardsiella ictaluri (strain 93-146).